Consider the following 841-residue polypeptide: Formin-like protein 10 (841 aa).

Positions 1 to 25 (MDGLCYVIFIIFSLLSCAFSPLSYA) are cleaved as a signal peptide. Residues 102–122 (LIPAISAVLAAATLIALAFFF) form a helical membrane-spanning segment. 3 disordered regions span residues 137 to 166 (SKSLASDISQSQQQTLPCPPPRNNNTQNKL), 254 to 297 (ISSH…RTVR), and 403 to 512 (KSSW…SKQR). Positions 139 to 152 (SLASDISQSQQQTL) are enriched in polar residues. The span at 254-278 (ISSHSDSPAMSPSAAMSPPMNSTAP) shows a compositional bias: low complexity. Over residues 279–293 (HWSTNQNTHSPSSPE) the composition is skewed to polar residues. Residues 426–444 (LPPPQRPPPAMPEPPPLVP) are compositionally biased toward pro residues. An FH2 domain is found at 469–841 (EGTTDRPKPK…KKMEVTSSLA (373 aa)). A compositionally biased stretch (polar residues) spans 502 to 512 (YNSSNANSKQR).

Belongs to the formin-like family. Class-I subfamily.

It is found in the membrane. Functionally, might be involved in the organization and polarity of the actin cytoskeleton. This Arabidopsis thaliana (Mouse-ear cress) protein is Formin-like protein 10 (FH10).